Reading from the N-terminus, the 1782-residue chain is Atrochrysone carboxylic acid synthase (1782 aa).

The interval 41–270 (HTYTKDRRYP…ALPVYGGLCH (230 aa)) is N-terminal acylcarrier protein transacylase domain (SAT). The Ketosynthase family 3 (KS3) domain maps to 407-841 (QSKIAIVGMS…GGNSTLAIEE (435 aa)). Catalysis depends on for beta-ketoacyl synthase activity residues Cys580, His716, and His759. A malonyl-CoA:ACP transacylase (MAT) domain region spans residues 946–1266 (FAFTGQGSSY…LGILHCAGVP (321 aa)). A product template (PT) domain region spans residues 1331-1648 (TSTVQQIIHE…RILLNRFFSA (318 aa)). An N-terminal hotdog fold region spans residues 1335–1468 (QQIIHEQYDG…ATVYYEEASD (134 aa)). One can recognise a PKS/mFAS DH domain in the interval 1335-1643 (QQIIHEQYDG…FRRYPRILLN (309 aa)). His1367 serves as the catalytic Proton acceptor; for dehydratase activity. Residues 1495–1643 (VANRFTRRMA…FRRYPRILLN (149 aa)) are C-terminal hotdog fold. Residue Asp1554 is the Proton donor; for dehydratase activity of the active site. The tract at residues 1653-1703 (ARKSTPATSAPAPAPPAGSEALQPKAAPASTPAAPASADAPTTNGVKAAAE) is disordered. Low complexity predominate over residues 1678–1695 (AAPASTPAAPASADAPTT). Residues 1704 to 1781 (PDANSTAAKA…DLKSWLLEYY (78 aa)) form the Carrier domain. At Ser1741 the chain carries O-(pantetheine 4'-phosphoryl)serine.

As to expression, specifically expressed in conidia.

The enzyme catalyses holo-[ACP] + 8 malonyl-CoA + 8 H(+) = atrochrysone carboxyl-[ACP] + 8 CO2 + 8 CoA + 2 H2O. It participates in secondary metabolite biosynthesis. Non-reducing polyketide synthase; part of the gene cluster that mediates the biosynthesis of trypacidin, a mycotoxin with antiprotozoal activity and that plays a role in the infection process. The pathway begins with the synthesis of atrochrysone thioester by the polyketide synthase (PKS) tpcC. The atrochrysone carboxyl ACP thioesterase tpcB then breaks the thioester bond and releases the atrochrysone carboxylic acid from tpcC. The decarboxylase tpcK converts atrochrysone carboxylic acid to atrochrysone which is further reduced into emodin anthrone. The next step is performed by the emodin anthrone oxygenase tpcL that catalyzes the oxidation of emodin anthrone to emodin. Emodin O-methyltransferase encoded by tpcA catalyzes methylation of the 8-hydroxy group of emodin to form questin. Ring cleavage of questin by questin oxidase tpcI leads to desmethylsulochrin via several intermediates including questin epoxide. Another methylation step catalyzed by tpcM leads to the formation of sulochrin which is further converted to monomethylsulfochrin by tpcH. Finally, the tpcJ catalyzes the conversion of monomethylsulfochrin to trypacidin. Trypacidin is toxic for human pulmonary and bronchial epithelial cells by initiating the intracellular formation of nitric oxide (NO) and hydrogen peroxide (H(2)O(2)), thus triggering host necrotic cell death. The trypacidin pathway is also able to produce endocrocin via a distinct route from the endocrocin Enc pathway. The sequence is that of Atrochrysone carboxylic acid synthase from Aspergillus fumigatus (strain ATCC MYA-4609 / CBS 101355 / FGSC A1100 / Af293) (Neosartorya fumigata).